The sequence spans 130 residues: EG45-like domain containing protein 2 (130 aa).

Positions 1 to 25 (MIKMAVKFVVVMIVFAQILAPIAEA) are cleaved as a signal peptide. The region spanning 28-130 (GKAVYYDPPY…GNIRVVYTPI (103 aa)) is the Expansin-like EG45 domain. A glycan (N-linked (GlcNAc...) asparagine) is linked at Asn-106.

As to expression, expressed in unstressed leaves.

It localises to the secreted. Plays a systemic role in water and solute homeostasis. This Arabidopsis thaliana (Mouse-ear cress) protein is EG45-like domain containing protein 2 (EGC2).